A 219-amino-acid polypeptide reads, in one-letter code: Large ribosomal subunit protein uL3 (219 aa).

A disordered region spans residues 133-153 (GRASHGNSRSHNVPGSIGMAQ). Glutamine 153 bears the N5-methylglutamine mark.

This sequence belongs to the universal ribosomal protein uL3 family. Part of the 50S ribosomal subunit. Forms a cluster with proteins L14 and L19. In terms of processing, methylated by PrmB.

Functionally, one of the primary rRNA binding proteins, it binds directly near the 3'-end of the 23S rRNA, where it nucleates assembly of the 50S subunit. The chain is Large ribosomal subunit protein uL3 from Burkholderia mallei (strain NCTC 10247).